We begin with the raw amino-acid sequence, 345 residues long: DNA-directed RNA polymerase subunit alpha (345 aa).

Residues 1–234 (MRKNEMSTSK…DLLTTFLYVR (234 aa)) form an alpha N-terminal domain (alpha-NTD) region. Residues 266–345 (LEERVLENRF…DKKIVLNRRK (80 aa)) are alpha C-terminal domain (alpha-CTD).

This sequence belongs to the RNA polymerase alpha chain family. In plastids the minimal PEP RNA polymerase catalytic core is composed of four subunits: alpha, beta, beta', and beta''. When a (nuclear-encoded) sigma factor is associated with the core the holoenzyme is formed, which can initiate transcription.

It localises to the plastid. Its subcellular location is the chloroplast. The enzyme catalyses RNA(n) + a ribonucleoside 5'-triphosphate = RNA(n+1) + diphosphate. Its function is as follows. DNA-dependent RNA polymerase catalyzes the transcription of DNA into RNA using the four ribonucleoside triphosphates as substrates. This is DNA-directed RNA polymerase subunit alpha from Adiantum capillus-veneris (Maidenhair fern).